Consider the following 536-residue polypeptide: Bicoumarin synthase desC (536 aa).

The chain crosses the membrane as a helical span at residues 12 to 32; it reads YVALAGITGFFLVFLGFLVVI. N-linked (GlcNAc...) asparagine glycosylation is found at N149 and N371. C480 is a binding site for heme.

Belongs to the cytochrome P450 family. The cofactor is heme.

It localises to the membrane. It carries out the reaction 2 7-demethylsiderin + NADPH + O2 = desertorin A + NADP(+) + 2 H2O. The protein operates within secondary metabolite biosynthesis. Functionally, non-reducing polyketide synthase; part of the gene cluster that mediates the biosynthesis of the bicoumarin desertorin. The non-reducing polyketide synthase desS first catalyzes the formation of the pentaketidic 4,7-dihydroxy-5-methylcoumarin from acetyl coenzyme A and 4 malonyl coenzyme A molecules. Further O-methylation by desB leads to the formation of 7-demethylsiderin. Then, an oxidative phenol coupling catalyzed by the cytochrome P450 monooxygenase desC forms the 6,8'-dimer M-desertorin A via dimerization the monomeric precursor, 7-demethylsiderin. M-desertorin A is further converted to M-desertorin C. This chain is Bicoumarin synthase desC, found in Aspergillus desertorum (Emericella desertorum).